Here is a 779-residue protein sequence, read N- to C-terminus: Phosphoribosylformylglycinamidine synthase subunit PurL (779 aa).

His-52 is a catalytic residue. 2 residues coordinate ATP: Tyr-55 and Lys-94. Residue Glu-96 participates in Mg(2+) binding. Residues 97–100 (SHNH) and Arg-119 contribute to the substrate site. The Proton acceptor role is filled by His-98. Asp-120 provides a ligand contact to Mg(2+). Position 243 (Gln-243) interacts with substrate. Asp-271 is a binding site for Mg(2+). 315–317 (ESQ) serves as a coordination point for substrate. The ATP site is built by Asn-523 and Gly-560. Asn-561 contributes to the Mg(2+) binding site. Ser-563 is a substrate binding site.

The protein belongs to the FGAMS family. Monomer. Part of the FGAM synthase complex composed of 1 PurL, 1 PurQ and 2 PurS subunits.

Its subcellular location is the cytoplasm. It catalyses the reaction N(2)-formyl-N(1)-(5-phospho-beta-D-ribosyl)glycinamide + L-glutamine + ATP + H2O = 2-formamido-N(1)-(5-O-phospho-beta-D-ribosyl)acetamidine + L-glutamate + ADP + phosphate + H(+). It functions in the pathway purine metabolism; IMP biosynthesis via de novo pathway; 5-amino-1-(5-phospho-D-ribosyl)imidazole from N(2)-formyl-N(1)-(5-phospho-D-ribosyl)glycinamide: step 1/2. In terms of biological role, part of the phosphoribosylformylglycinamidine synthase complex involved in the purines biosynthetic pathway. Catalyzes the ATP-dependent conversion of formylglycinamide ribonucleotide (FGAR) and glutamine to yield formylglycinamidine ribonucleotide (FGAM) and glutamate. The FGAM synthase complex is composed of three subunits. PurQ produces an ammonia molecule by converting glutamine to glutamate. PurL transfers the ammonia molecule to FGAR to form FGAM in an ATP-dependent manner. PurS interacts with PurQ and PurL and is thought to assist in the transfer of the ammonia molecule from PurQ to PurL. This Prochlorococcus marinus (strain MIT 9215) protein is Phosphoribosylformylglycinamidine synthase subunit PurL.